The chain runs to 321 residues: uncharacterized protein (321 aa).

This is an uncharacterized protein from Galliformes (FAdV-1).